We begin with the raw amino-acid sequence, 249 residues long: 5'-nucleotidase SurE (249 aa).

Asp8, Asp9, Ser39, and Asn91 together coordinate a divalent metal cation.

The protein belongs to the SurE nucleotidase family. A divalent metal cation is required as a cofactor.

Its subcellular location is the cytoplasm. It catalyses the reaction a ribonucleoside 5'-phosphate + H2O = a ribonucleoside + phosphate. Functionally, nucleotidase that shows phosphatase activity on nucleoside 5'-monophosphates. The chain is 5'-nucleotidase SurE from Haemophilus influenzae (strain 86-028NP).